The chain runs to 218 residues: Monomethylamine corrinoid protein 1 (218 aa).

One can recognise a B12-binding N-terminal domain in the interval 1–91 (MANQEIFDKL…ELEKTKVEGE (91 aa)). The region spanning 94–218 (TGLAITFVAE…AAKVALNIMK (125 aa)) is the B12-binding domain. Histidine 107 contacts methylcob(III)alamin.

It belongs to the methylamine corrinoid protein family. In terms of assembly, can form a complex with MtmB.

Its pathway is one-carbon metabolism; methanogenesis from methylamine. In terms of biological role, acts as a methyl group carrier between MtmB and MtbA. The sequence is that of Monomethylamine corrinoid protein 1 (mtmC1) from Methanosarcina mazei (strain ATCC BAA-159 / DSM 3647 / Goe1 / Go1 / JCM 11833 / OCM 88) (Methanosarcina frisia).